A 298-amino-acid chain; its full sequence is tRNA pseudouridine synthase-like 1 (298 aa).

Aspartate 60 acts as the Nucleophile in catalysis. Tyrosine 124 contacts substrate.

Belongs to the tRNA pseudouridine synthase TruA family.

The catalysed reaction is a uridine in tRNA = a pseudouridine in tRNA. This chain is tRNA pseudouridine synthase-like 1 (pusl1), found in Xenopus laevis (African clawed frog).